Reading from the N-terminus, the 445-residue chain is Phosphoglucosamine mutase (445 aa).

The active-site Phosphoserine intermediate is the Ser102. Ser102, Asp241, Asp243, and Asp245 together coordinate Mg(2+). Residue Ser102 is modified to Phosphoserine.

The protein belongs to the phosphohexose mutase family. It depends on Mg(2+) as a cofactor. Post-translationally, activated by phosphorylation.

It catalyses the reaction alpha-D-glucosamine 1-phosphate = D-glucosamine 6-phosphate. In terms of biological role, catalyzes the conversion of glucosamine-6-phosphate to glucosamine-1-phosphate. The polypeptide is Phosphoglucosamine mutase (Serratia proteamaculans (strain 568)).